The chain runs to 321 residues: Lipoyl synthase (321 aa).

7 residues coordinate [4Fe-4S] cluster: cysteine 68, cysteine 73, cysteine 79, cysteine 94, cysteine 98, cysteine 101, and serine 308. Positions 80–297 (FNHGTATFMI…KAEALAMGFT (218 aa)) constitute a Radical SAM core domain.

The protein belongs to the radical SAM superfamily. Lipoyl synthase family. The cofactor is [4Fe-4S] cluster.

It localises to the cytoplasm. It carries out the reaction [[Fe-S] cluster scaffold protein carrying a second [4Fe-4S](2+) cluster] + N(6)-octanoyl-L-lysyl-[protein] + 2 oxidized [2Fe-2S]-[ferredoxin] + 2 S-adenosyl-L-methionine + 4 H(+) = [[Fe-S] cluster scaffold protein] + N(6)-[(R)-dihydrolipoyl]-L-lysyl-[protein] + 4 Fe(3+) + 2 hydrogen sulfide + 2 5'-deoxyadenosine + 2 L-methionine + 2 reduced [2Fe-2S]-[ferredoxin]. Its pathway is protein modification; protein lipoylation via endogenous pathway; protein N(6)-(lipoyl)lysine from octanoyl-[acyl-carrier-protein]: step 2/2. In terms of biological role, catalyzes the radical-mediated insertion of two sulfur atoms into the C-6 and C-8 positions of the octanoyl moiety bound to the lipoyl domains of lipoate-dependent enzymes, thereby converting the octanoylated domains into lipoylated derivatives. The sequence is that of Lipoyl synthase from Escherichia coli O9:H4 (strain HS).